The chain runs to 417 residues: uncharacterized protein (417 aa).

Disordered regions lie at residues 1-41 (MDSE…EDQA) and 233-262 (QDSAYNDQAPSTSYHHHHHEQLEAGKSTRS). The segment covering 31-41 (DEDHIFHEDQA) has biased composition (basic and acidic residues). The span at 235 to 245 (SAYNDQAPSTS) shows a compositional bias: polar residues.

This is an uncharacterized protein from Caenorhabditis elegans.